A 430-amino-acid polypeptide reads, in one-letter code: uncharacterized protein (430 aa).

This is an uncharacterized protein from Human herpesvirus 7 (strain JI) (HHV-7).